The chain runs to 309 residues: Probable nitrogen assimilation transcriptional activator (309 aa).

In terms of domain architecture, HTH lysR-type spans 1-57 (MRLEQLQAFLKVAELGSFQQAALQSEVTQSTISRQIQGLESALKCQLFHRGAQAKLT). Residues 18–38 (FQQAALQSEVTQSTISRQIQG) constitute a DNA-binding region (H-T-H motif).

The protein belongs to the LysR transcriptional regulatory family.

In terms of biological role, seems to regulate utilization of fixed nitrogen by controlling the expression of a certain gene(s) involved in nitrogen metabolism. This is Probable nitrogen assimilation transcriptional activator (ntcB) from Synechocystis sp. (strain ATCC 27184 / PCC 6803 / Kazusa).